The chain runs to 422 residues: Glutamate-1-semialdehyde 2,1-aminomutase (422 aa).

At Lys258 the chain carries N6-(pyridoxal phosphate)lysine.

The protein belongs to the class-III pyridoxal-phosphate-dependent aminotransferase family. HemL subfamily. In terms of assembly, homodimer. Requires pyridoxal 5'-phosphate as cofactor.

It is found in the cytoplasm. It catalyses the reaction (S)-4-amino-5-oxopentanoate = 5-aminolevulinate. Its pathway is porphyrin-containing compound metabolism; protoporphyrin-IX biosynthesis; 5-aminolevulinate from L-glutamyl-tRNA(Glu): step 2/2. This chain is Glutamate-1-semialdehyde 2,1-aminomutase, found in Chlamydia muridarum (strain MoPn / Nigg).